The sequence spans 273 residues: Patr class II histocompatibility antigen, DO beta chain (273 aa).

Residues 1–26 (MGSGWVPWVVALLVNLTRLDSSMTQG) form the signal peptide. The segment at 27–120 (TDSPEDFVIQ…LGAPFTVGRK (94 aa)) is beta-1. Residues 27-224 (TDSPEDFVIQ…RAQSEYSWKK (198 aa)) are Extracellular-facing. Disulfide bonds link cysteine 41–cysteine 105 and cysteine 143–cysteine 199. A glycan (N-linked (GlcNAc...) asparagine) is linked at asparagine 45. Residues 121-214 (VQPEVTVYPE…SLLSPVSVEW (94 aa)) form a beta-2 region. Positions 123–213 (PEVTVYPERT…SSLLSPVSVE (91 aa)) constitute an Ig-like C1-type domain. Positions 215 to 224 (RAQSEYSWKK) are connecting peptide. A helical transmembrane segment spans residues 225 to 245 (MLSGIAAFLLGLIFLLVGIVI). Topologically, residues 246–273 (QLRAQKGYVRTQMSGNEVSRAVLLPQSC) are cytoplasmic.

It belongs to the MHC class II family. Heterodimer of an alpha chain (DOA) and a beta chain (DOB). Forms a heterotetrameric complex with an HLA-DM molecule during intracellular transport in endosomal/lysosomal compartments in B-cells.

It localises to the endosome membrane. It is found in the lysosome membrane. In terms of biological role, important modulator in the HLA class II restricted antigen presentation pathway by interaction with the HLA-DM molecule in B-cells. Modifies peptide exchange activity of HLA-DM. The sequence is that of Patr class II histocompatibility antigen, DO beta chain (Patr-DOB) from Pan troglodytes (Chimpanzee).